A 71-amino-acid polypeptide reads, in one-letter code: Exodeoxyribonuclease 7 small subunit (71 aa).

The protein belongs to the XseB family. In terms of assembly, heterooligomer composed of large and small subunits.

It localises to the cytoplasm. It catalyses the reaction Exonucleolytic cleavage in either 5'- to 3'- or 3'- to 5'-direction to yield nucleoside 5'-phosphates.. In terms of biological role, bidirectionally degrades single-stranded DNA into large acid-insoluble oligonucleotides, which are then degraded further into small acid-soluble oligonucleotides. This Clostridium botulinum (strain Loch Maree / Type A3) protein is Exodeoxyribonuclease 7 small subunit.